A 265-amino-acid chain; its full sequence is Glutamate racemase (265 aa).

Residues 12–13 and 44–45 each bind substrate; these read DS and YG. Cys75 acts as the Proton donor/acceptor in catalysis. Position 76-77 (76-77) interacts with substrate; the sequence is NT. The Proton donor/acceptor role is filled by Cys186. 187–188 lines the substrate pocket; that stretch reads TH.

It belongs to the aspartate/glutamate racemases family.

It carries out the reaction L-glutamate = D-glutamate. It functions in the pathway cell wall biogenesis; peptidoglycan biosynthesis. Functionally, provides the (R)-glutamate required for cell wall biosynthesis. This chain is Glutamate racemase, found in Pseudomonas putida (strain ATCC 47054 / DSM 6125 / CFBP 8728 / NCIMB 11950 / KT2440).